Reading from the N-terminus, the 390-residue chain is MPTKKDYYEILGVPRNATQDEIKQAYRRLVRQYHPDLNKDPSAHEKFKEINEAYEVLSDPQKRAQYDQFGHVGDFSGYGDFQGGWQPGGFDFGDLGRNFEDIFENFFGDSIFGDLFGRRREREKAPRKGADLRYDINITLEEAAFGSEKEIYVTRLETCPTCKGKGTEPGTNPVKCDMCNGTGQIRNMRQTPFGQFVQITTCPKCHGTGQIIINPCHECHGTGKVRRKRRVEFKIPAGVDEGYVIRLAGEGEPGENGGPNGDIYIHIHIIPHKIFKRDNEDIWMELPIDYLIALLGGEVEVPTLEGKEKIYIKPGTQTGEVITLKGKGIPYLRNKNQRGDQKIVVKITVPQNLSPKEKELLLEIAKLRGINIEKDKNIFEQIKKAFKGDN.

A J domain is found at 6-70 (DYYEILGVPR…QKRAQYDQFG (65 aa)). The segment at 146 to 228 (GSEKEIYVTR…CHGTGKVRRK (83 aa)) adopts a CR-type zinc-finger fold. Residues cysteine 159, cysteine 162, cysteine 176, cysteine 179, cysteine 202, cysteine 205, cysteine 216, and cysteine 219 each coordinate Zn(2+). CXXCXGXG motif repeat units follow at residues 159–166 (CPTCKGKG), 176–183 (CDMCNGTG), 202–209 (CPKCHGTG), and 216–223 (CHECHGTG).

It belongs to the DnaJ family. As to quaternary structure, homodimer. Zn(2+) serves as cofactor.

It is found in the cytoplasm. In terms of biological role, participates actively in the response to hyperosmotic and heat shock by preventing the aggregation of stress-denatured proteins and by disaggregating proteins, also in an autonomous, DnaK-independent fashion. Unfolded proteins bind initially to DnaJ; upon interaction with the DnaJ-bound protein, DnaK hydrolyzes its bound ATP, resulting in the formation of a stable complex. GrpE releases ADP from DnaK; ATP binding to DnaK triggers the release of the substrate protein, thus completing the reaction cycle. Several rounds of ATP-dependent interactions between DnaJ, DnaK and GrpE are required for fully efficient folding. Also involved, together with DnaK and GrpE, in the DNA replication of plasmids through activation of initiation proteins. The polypeptide is Chaperone protein DnaJ (Dictyoglomus thermophilum (strain ATCC 35947 / DSM 3960 / H-6-12)).